The sequence spans 767 residues: Cilium assembly protein DZIP1L (767 aa).

Residues 122–144 (QQRGQQELGRQADELKGVREESR) form a disordered region. Positions 131–144 (RQADELKGVREESR) are enriched in basic and acidic residues. The C2H2-type zinc finger occupies 166 to 189 (HTCHLCDKTFMNATFLRGHIQRRH). Positions 205-406 (VEEVLEELRA…SQEEMIQSLS (202 aa)) form a coiled coil. A Phosphoserine modification is found at Ser426. The disordered stretch occupies residues 518–767 (SRAKERQENG…SSGQPRVPAW (250 aa)). Polar residues-rich tracts occupy residues 533-547 (PDGQ…STLV) and 574-588 (RQSH…TQVS). Residues 607–616 (GPGMSTPPFS) show a composition bias toward low complexity. Polar residues predominate over residues 658 to 675 (ENAQPPGQGSGTLVQSMV). The segment covering 677–686 (NLEKQLEAPA) has biased composition (basic and acidic residues).

The protein belongs to the DZIP C2H2-type zinc-finger protein family. As to quaternary structure, interacts with SEPTIN2.

It localises to the cytoplasm. It is found in the cytoskeleton. The protein resides in the cilium basal body. The protein localises to the microtubule organizing center. Its subcellular location is the centrosome. It localises to the centriole. Involved in primary cilium formation. Probably acts as a transition zone protein required for localization of PKD1/PC1 and PKD2/PC2 to the ciliary membrane. This chain is Cilium assembly protein DZIP1L, found in Homo sapiens (Human).